We begin with the raw amino-acid sequence, 405 residues long: Envelope glycoprotein M (405 aa).

The Intravirion segment spans residues 1–17 (MKSSKNDTFVYRTWFKT). Residues 18 to 38 (LVVYFVMFVMSAVVPITAMFP) form a helical membrane-spanning segment. Topologically, residues 39 to 76 (NLGYPCYFNALVDYGALNLTNYNLAHHLTPTLYLEPPE) are virion surface. A helical membrane pass occupies residues 77-97 (MFVYITLVFIADCVAFIYYAC). Topologically, residues 98–121 (GEVALIKARKKVSGLTDLSAWVSA) are intravirion. The helical transmembrane segment at 122 to 142 (VGSPTVLFLAILKLWSIQVFI) threads the bilayer. The Virion surface portion of the chain corresponds to 143-149 (QVLSYKH). Residues 150-170 (VFLSAFVYFLHFLASVLHACA) form a helical membrane-spanning segment. At 171-192 (CVTRFSPVWVVKAQDNSIPQDT) the chain is on the intravirion side. The chain crosses the membrane as a helical span at residues 193–215 (FLWWVVFYLKPIVTNLYLGCLAL). The Virion surface segment spans residues 216-245 (ETLVFSLSVFLALGNSFYFMVGDMVLGAVN). A helical transmembrane segment spans residues 246 to 266 (LFLVLPIFWYILTEVWLASFL). Position 267 (Arg-267) is a topological domain, intravirion. A helical membrane pass occupies residues 268 to 288 (HNFGFYCGMFIASIILILPLV). Residues 289-299 (RYEAVFVSAKL) are Virion surface-facing. The helical transmembrane segment at 300–320 (HTTVAINVAIIPILCSVAMLI) threads the bilayer. Residues 321–405 (RICRIFKSMR…TTDSEEEIFP (85 aa)) lie on the Intravirion side of the membrane. A disordered region spans residues 346-405 (LESEPRPRPSRTPSPGRNRRRSSTSSSSSRSTRRQRPVSTQALISSVLPMTTDSEEEIFP). Residues 386 to 397 (QALISSVLPMTT) are compositionally biased toward polar residues.

This sequence belongs to the herpesviridae glycoprotein M family. In terms of assembly, interacts (via N-terminus) with gN (via N-terminus). The gM-gN heterodimer forms the gCII complex.

Its subcellular location is the virion membrane. It localises to the host Golgi apparatus. It is found in the host trans-Golgi network. The protein localises to the host endosome membrane. The protein resides in the host nucleus inner membrane. Functionally, envelope glycoprotein important for virion assembly and egress. Plays a role in the correct incorporation of gH-gL into virion membrane. Directs the glycoprotein N (gN) to the host trans-Golgi network. This Homo sapiens (Human) protein is Envelope glycoprotein M.